The following is a 432-amino-acid chain: MPNVVVVGAQWGDEGKGRVVDWLAAQADLVARYNGGHNAGHTLVVGGKTYKLALLPSGVVRGKRGVIGNGVALDPEALLAEIGRMAELGLSVTPDNLSIAENATLVLPIHRAIDQAQERLRREPIGTTLRGIGPAYEDKVGRRGLRVGDLAEPGRLAAKLDVLVDHHNAWFRGLGLDEYSRDAMLATLVDLAPRILPFVRPVWADLNDATDRGERILFEGSQAVMLDIDWGTYPFVTSSGTVASAAAAGTGLGASKLGHVLGVTKAYATRVGGGPFLTELSDATGETLRARGQEFGVNTGRPRRCGWLDAAQLRQAVRISGIDSLALTKLDVLDGFESIELCVGYEFDGARVDHLPASLDAQSRAKPVYERFDGWRGTVKGVRERAALPRAAQDFIARVEAVAGAPVSMITTGAERDDTIVLRNPFDAAAGA.

GTP is bound by residues 12–18 (GDEGKGR) and 40–42 (GHT). The active-site Proton acceptor is the Asp-13. The Mg(2+) site is built by Asp-13 and Gly-40. IMP contacts are provided by residues 13 to 16 (DEGK), 38 to 41 (NAGH), Thr-128, Arg-142, Gln-222, Thr-237, and Arg-301. The active-site Proton donor is His-41. Substrate is bound at residue 297 to 303 (VNTGRPR). Residues Arg-303, 329 to 331 (KLD), and 411 to 413 (TTG) each bind GTP.

Belongs to the adenylosuccinate synthetase family. Homodimer. The cofactor is Mg(2+).

The protein resides in the cytoplasm. The enzyme catalyses IMP + L-aspartate + GTP = N(6)-(1,2-dicarboxyethyl)-AMP + GDP + phosphate + 2 H(+). The protein operates within purine metabolism; AMP biosynthesis via de novo pathway; AMP from IMP: step 1/2. Its function is as follows. Plays an important role in the de novo pathway of purine nucleotide biosynthesis. Catalyzes the first committed step in the biosynthesis of AMP from IMP. The polypeptide is Adenylosuccinate synthetase 2 (Burkholderia lata (strain ATCC 17760 / DSM 23089 / LMG 22485 / NCIMB 9086 / R18194 / 383)).